Consider the following 419-residue polypeptide: GTPase Obg (419 aa).

The 156-residue stretch at Met1 to Met156 folds into the Obg domain. Positions Ala157–Ile334 constitute an OBG-type G domain. Residues Gly163–Ser170, Phe188–Ala192, Asp209–Gly212, Asn278–Asp281, and Asn315–Ile317 each bind GTP. Mg(2+)-binding residues include Ser170 and Thr190. The region spanning Ile342–Asn419 is the OCT domain.

This sequence belongs to the TRAFAC class OBG-HflX-like GTPase superfamily. OBG GTPase family. As to quaternary structure, monomer. Requires Mg(2+) as cofactor.

The protein localises to the cytoplasm. Functionally, an essential GTPase which binds GTP, GDP and possibly (p)ppGpp with moderate affinity, with high nucleotide exchange rates and a fairly low GTP hydrolysis rate. Plays a role in control of the cell cycle, stress response, ribosome biogenesis and in those bacteria that undergo differentiation, in morphogenesis control. The protein is GTPase Obg of Mesomycoplasma hyopneumoniae (strain J / ATCC 25934 / NCTC 10110) (Mycoplasma hyopneumoniae).